We begin with the raw amino-acid sequence, 529 residues long: Peptide chain release factor 3 (529 aa).

The tr-type G domain occupies 11–280 (NKRRTFAIIS…GLTEWAPKPQ (270 aa)). GTP is bound by residues 20–27 (SHPDAGKT), 88–92 (DTPGH), and 142–145 (NKLD).

This sequence belongs to the TRAFAC class translation factor GTPase superfamily. Classic translation factor GTPase family. PrfC subfamily.

The protein resides in the cytoplasm. In terms of biological role, increases the formation of ribosomal termination complexes and stimulates activities of RF-1 and RF-2. It binds guanine nucleotides and has strong preference for UGA stop codons. It may interact directly with the ribosome. The stimulation of RF-1 and RF-2 is significantly reduced by GTP and GDP, but not by GMP. The protein is Peptide chain release factor 3 of Mannheimia succiniciproducens (strain KCTC 0769BP / MBEL55E).